A 1441-amino-acid polypeptide reads, in one-letter code: Tripeptidyl-peptidase 2 (1441 aa).

The interval 62 to 89 (AESSERSNSSKKTTNKEQSDKSAESRMA) is disordered. Positions 75-85 (TNKEQSDKSAE) are enriched in basic and acidic residues. A Peptidase S8 domain is found at 107 to 608 (ETGVLNFLQK…HGLLNVEKAF (502 aa)). Catalysis depends on charge relay system residues Asp131, His359, and Ser549. Residues 1139–1155 (TANGAKPKAPATPQAAT) show a composition bias toward low complexity. Disordered regions lie at residues 1139–1190 (TANG…KANA) and 1255–1274 (QKTS…EDQK). Ser1182 is subject to Phosphoserine. Basic and acidic residues predominate over residues 1265 to 1274 (SADKQKEDQK).

Belongs to the peptidase S8 family. Homooligomer; forms a complex of 6 MDa probably composed of 40 subunits. Forms a structure consisting of 2 segmented and twisted strands that form a spindle-shaped structure. Each strand is composed of 10 segments (a segment being a homodimer oriented head to head), stacking of these segments leads to the formation of a twisted single strand. 2 strands compose the fully assembled spindle.

It is found in the cytoplasm. It catalyses the reaction Release of an N-terminal tripeptide from a polypeptide.. With respect to regulation, inhibited by phenylmethanesulfonyl fluoride (PMSF) and butabindide, but not by peptidase inhibitor pepstatin, EDTA, nor bestatin. Component of the proteolytic cascade acting downstream of the 26S proteasome in the ubiquitin-proteasome pathway. Efficiently cleaves Ala-Ala-Ala-polypeptide and Pro-Pro-Ala-polypeptide, Val-Leu-Lys-polypeptide only at high concentration. Does not cleave Ala-Phe-Pro-polypeptide nor Pro-Leu-Gly-polypeptide. The protein is Tripeptidyl-peptidase 2 (TppII) of Drosophila melanogaster (Fruit fly).